The sequence spans 1891 residues: TATA-binding protein-associated factor mot1 (1891 aa).

One copy of the HEAT 1 repeat lies at Pro30–Thr68. 3 disordered regions span residues Phe184 to Arg216, Leu241 to Ser283, and Phe295 to Asn316. Basic and acidic residues predominate over residues Glu264–Pro275. HEAT repeat units follow at residues Ser473–Lys511 and Ser569–Glu606. Low complexity predominate over residues Ser699–Ser710. Positions Ser699–Met740 are disordered. HEAT repeat units follow at residues Pro957–Thr996, Tyr1139–Val1177, Thr1181–Asp1216, and Leu1219–Leu1257. A Helicase ATP-binding domain is found at Ala1316–Gly1489. Position 1329-1336 (Asp1329–Thr1336) interacts with ATP. The short motif at Asp1440–His1443 is the DEAH box element. An HEAT 8 repeat occupies Glu1526 to Arg1565. The region spanning Asp1663 to Gly1813 is the Helicase C-terminal domain.

This sequence belongs to the SNF2/RAD54 helicase family. In terms of assembly, forms the NCT transcriptional regulatory complex with nctA and nctB.

Its subcellular location is the nucleus. Regulates transcription in association with TATA binding protein (TBP). Removes TBP from the TATA box via its C-terminal ATPase activity. Both transcription activation and repression require its ATPase activity. Part of the NCT transcriptional regulatory complex that acts as a key regulator of ergosterol biosynthesis and the azole exporter cdr1B. The NCT complex binds the promoters of genes linked to azole susceptibility, and especially represses the expression of cdr1B transporter. This is TATA-binding protein-associated factor mot1 from Aspergillus fumigatus (strain CBS 144.89 / FGSC A1163 / CEA10) (Neosartorya fumigata).